A 949-amino-acid polypeptide reads, in one-letter code: L-fucokinase/L-fucose-1-P guanylyltransferase (949 aa).

A fucose-1-phosphate guanylyltransferase region spans residues 25–191 (DWFCTSDPVG…DFMLQKPSLA (167 aa)). Positions 559–949 (LLRDGLLDGI…SDKGFQVSRS (391 aa)) are L-fucokinase.

This sequence belongs to the GHMP kinase family. As to quaternary structure, homotetramer. Requires Mn(2+) as cofactor. Mg(2+) is required as a cofactor.

It catalyses the reaction L-fucose + ATP = beta-L-fucose 1-phosphate + ADP + H(+). It carries out the reaction beta-L-fucose 1-phosphate + GTP + H(+) = GDP-beta-L-fucose + diphosphate. Its function is as follows. Bifunctional enzyme involved in the salvage pathway of GDP-fucose synthesis. Catalyzes two successive reactions, the ATP-dependent phosphorylation of L-fucose to L-fucose 1-phosphate, and its guanylylation to GDP-L-fucose. GDP-fucose is an important fucose donor in the process of fucosylated oligosaccharides formation. The polypeptide is L-fucokinase/L-fucose-1-P guanylyltransferase (Bacteroides fragilis).